A 321-amino-acid polypeptide reads, in one-letter code: MSMQDTFSSPEHFTVLLREAVGGLALKENGIYIDGTFGRGGHSRFILSQLSKKGQLIAIDRDPQAIQVAQNIQDPRFRIVHDSFSAIPDICEKLGLTGKIDGILLDLGVSSPQLDNAERGFSFMKDGPLDMRMDTTQGLSATEWLRQVSEQDLAWVLKTFGEERFAKRIAQAIVGYNKSAVQSGAEPLNRTLQLAELIAQSVPFKDKYKHPATRSFQAIRIFINSELDELEKVLNGALNVLAPQGRLSIISFHSLEDRMVKHFIRKQSKGDDLPKGLPLREEQIQHNQKLKPVGKAIMPTEQEMAANVRSRSAVLRIAERI.

Residues Gly40–His42, Asp60, Phe84, Asp106, and Gln113 each bind S-adenosyl-L-methionine.

This sequence belongs to the methyltransferase superfamily. RsmH family.

It localises to the cytoplasm. The enzyme catalyses cytidine(1402) in 16S rRNA + S-adenosyl-L-methionine = N(4)-methylcytidine(1402) in 16S rRNA + S-adenosyl-L-homocysteine + H(+). Specifically methylates the N4 position of cytidine in position 1402 (C1402) of 16S rRNA. The protein is Ribosomal RNA small subunit methyltransferase H of Histophilus somni (strain 2336) (Haemophilus somnus).